Here is a 63-residue protein sequence, read N- to C-terminus: MARVCDVCQKGKVSGNQVSHSNRHNRRTWTPNLRKVRAIVKGTPKRLKVCTRCLRSGKVERAL.

It belongs to the bacterial ribosomal protein bL28 family.

The polypeptide is Large ribosomal subunit protein bL28 (Alkaliphilus metalliredigens (strain QYMF)).